The following is a 414-amino-acid chain: uncharacterized protein (414 aa).

In terms of domain architecture, Nop spans 246 to 360 (EAPNITKLAG…LNKRVEEIRR (115 aa)). The disordered stretch occupies residues 358 to 414 (IRRKYPKPPKKKKKEKPKAKKKEKKGKKEKSKKKKDKKKDKKGKKERKVIGKTKSRK). The segment covering 361 to 414 (KYPKPPKKKKKEKPKAKKKEKKGKKEKSKKKKDKKKDKKGKKERKVIGKTKSRK) has biased composition (basic residues).

This sequence belongs to the NOP5/NOP56 family.

This is an uncharacterized protein from Methanocaldococcus jannaschii (strain ATCC 43067 / DSM 2661 / JAL-1 / JCM 10045 / NBRC 100440) (Methanococcus jannaschii).